An 83-amino-acid chain; its full sequence is Small ribosomal subunit protein bS20 (83 aa).

The protein belongs to the bacterial ribosomal protein bS20 family.

Functionally, binds directly to 16S ribosomal RNA. The sequence is that of Small ribosomal subunit protein bS20 from Flavobacterium psychrophilum (strain ATCC 49511 / DSM 21280 / CIP 103535 / JIP02/86).